A 156-amino-acid polypeptide reads, in one-letter code: Small ribosomal subunit protein uS7 (156 aa).

It belongs to the universal ribosomal protein uS7 family. As to quaternary structure, part of the 30S ribosomal subunit. Contacts proteins S9 and S11.

Functionally, one of the primary rRNA binding proteins, it binds directly to 16S rRNA where it nucleates assembly of the head domain of the 30S subunit. Is located at the subunit interface close to the decoding center, probably blocks exit of the E-site tRNA. The protein is Small ribosomal subunit protein uS7 of Chlorobaculum tepidum (strain ATCC 49652 / DSM 12025 / NBRC 103806 / TLS) (Chlorobium tepidum).